Reading from the N-terminus, the 356-residue chain is Peptide chain release factor 1 (356 aa).

Glutamine 234 bears the N5-methylglutamine mark.

This sequence belongs to the prokaryotic/mitochondrial release factor family. Methylated by PrmC. Methylation increases the termination efficiency of RF1.

Its subcellular location is the cytoplasm. Its function is as follows. Peptide chain release factor 1 directs the termination of translation in response to the peptide chain termination codons UAG and UAA. The protein is Peptide chain release factor 1 of Exiguobacterium sp. (strain ATCC BAA-1283 / AT1b).